A 170-amino-acid polypeptide reads, in one-letter code: RNA pyrophosphohydrolase (170 aa).

One can recognise a Nudix hydrolase domain in the interval P8–K158. Residues G46–S67 carry the Nudix box motif.

This sequence belongs to the Nudix hydrolase family. RppH subfamily. The cofactor is a divalent metal cation.

In terms of biological role, accelerates the degradation of transcripts by removing pyrophosphate from the 5'-end of triphosphorylated RNA, leading to a more labile monophosphorylated state that can stimulate subsequent ribonuclease cleavage. In Nitrobacter winogradskyi (strain ATCC 25391 / DSM 10237 / CIP 104748 / NCIMB 11846 / Nb-255), this protein is RNA pyrophosphohydrolase.